A 711-amino-acid chain; its full sequence is Taperin (711 aa).

Disordered regions lie at residues 134-305 (SRLL…APKP), 328-384 (RNSF…LGKS), and 414-438 (QRPSSPPPFLPAASEEAEPAEGLRV). A compositionally biased stretch (pro residues) spans 157 to 180 (PPPPPPPPAPPRPPPAAPSPPAAP). The segment covering 197–206 (LQKTGSNSFT) has biased composition (polar residues). Ser241 bears the Phosphoserine mark. Residues 267–282 (TPSATPASPPASATPS) are compositionally biased toward low complexity. The segment covering 283-296 (QRQCVSAATSTNDS) has biased composition (polar residues). 3 positions are modified to phosphoserine: Ser362, Ser418, and Ser463. Disordered regions lie at residues 500–535 (TFTVVPKRKPGTLQDQHFSQANREPRPREAEEEEAS), 572–630 (SRKK…EKPF), 642–662 (SVRPESSRLPEGSSGLSSYTP), and 674–711 (QALEQAPREAEPPPVEAMLTPASQNDLSDFRSEPALYF). Polar residues-rich tracts occupy residues 512–521 (LQDQHFSQAN) and 581–590 (NDKSLQTTFE). Residues 597–624 (LEQEEEVDQQEEEEEEEEEEEEEEEGSG) are compositionally biased toward acidic residues.

This sequence belongs to the taperin family. In terms of assembly, interacts with GRXCR2; the interaction restricts TPRN to the stereocilum basal region. Interacts with actin ACTB; the interaction may stabilize stereocilia. Interacts with CLIC5. Interacts with PTPRQ. TPRN, CLIC5 and PTPQR form concentric rings at the base of stereocilia and may form a complex. Interacts with phosphatase PPP1CA; the interaction results in inhibition of PPC1A phosphatase activity. Interacts with DNA damage response proteins XRCC6/KU70, XRCC5/KU80, PARP1, TOP1 and TOP2A; these interactions recruit TPRN to sites of DNA damage where it may play a role in DNA repair. Expression is detected in fetal cochlea.

The protein resides in the cell projection. It localises to the stereocilium. The protein localises to the microvillus. Its subcellular location is the nucleus. It is found in the nucleoplasm. The protein resides in the cytoplasm. Its function is as follows. Essential for hearing. Required for maintenance of stereocilia on both inner and outer hair cells. Necessary for the integrity of the stereociliary rootlet. May act as an actin cytoskeleton regulator involved in the regulation of actin dynamics at the pointed end in hair cells. Forms rings at the base of stereocilia and binds actin filaments in the stereocilia which may stabilize the stereocilia. Acts as a strong inhibitor of PPP1CA phosphatase activity. Recruited to sites of DNA damage and may play a role in DNA damage repair. The polypeptide is Taperin (TPRN) (Homo sapiens (Human)).